A 498-amino-acid polypeptide reads, in one-letter code: WD repeat-containing protein 55 homolog (498 aa).

Residues 1 to 131 (MHTHNNFKTP…ATFDLDEDDE (131 aa)) form a disordered region. 2 stretches are compositionally biased toward acidic residues: residues 12–23 (DEDELDDLDEDM) and 31–48 (IEQEVLNESDSDNDEYDL). WD repeat units lie at residues 154-193 (KLEDFITDICFHPDRDIIALATIIGDVHLYEYDNEANKLL), 198-237 (VHSKACRDVEFTEDGRFLLTCSKDKCVMVTDMETEKLKKL), 241-279 (AHDDAINTLHVLNENLFASGDDAGTVKLWDLRTKNAIFE), 282-321 (ELEDQITQLTTNEQSKLLLATSADGYLTTFNISARKMYVQ), 324-363 (PYEEELNCMGVYRGDSKLVVGTSKGRLYTYNWGQFGYHCD), and 408-447 (QHNMPIESLDVNASGELIASSSHNNDVRFWNVKYFEDFGE).

Belongs to the WD repeat WDR55 family.

In Drosophila simulans (Fruit fly), this protein is WD repeat-containing protein 55 homolog.